We begin with the raw amino-acid sequence, 68 residues long: Guanine nucleotide-binding protein G(I)/G(S)/G(O) subunit gamma-10 (68 aa).

Ser-2 carries the post-translational modification N-acetylserine. Cys-65 is subject to Cysteine methyl ester. Cys-65 is lipidated: S-geranylgeranyl cysteine. Residues 66–68 (ALL) constitute a propeptide, removed in mature form.

Belongs to the G protein gamma family. G proteins are composed of 3 units, alpha, beta and gamma. Abundantly and ubiquitously expressed.

Its subcellular location is the cell membrane. Its function is as follows. Guanine nucleotide-binding proteins (G proteins) are involved as a modulator or transducer in various transmembrane signaling systems. The beta and gamma chains are required for the GTPase activity, for replacement of GDP by GTP, and for G protein-effector interaction. Interacts with beta-1 and beta-2, but not with beta-3. This Homo sapiens (Human) protein is Guanine nucleotide-binding protein G(I)/G(S)/G(O) subunit gamma-10 (GNG10).